The primary structure comprises 570 residues: GTPase Obg (570 aa).

Positions 2–168 (SDFVDRVTVH…RDIILELKSI (167 aa)) constitute an Obg domain. The segment at 15–43 (GDGGNGSAGIRREKYKPLAGPNGGNGGKG) is disordered. In terms of domain architecture, OBG-type G spans 169-349 (ADVALVGFPS…LNFALAKLVK (181 aa)). Residues 175-182 (GFPSAGKS), 200-204 (FTTLV), 221-224 (DVPG), 301-304 (NKID), and 330-332 (STA) each bind GTP. The Mg(2+) site is built by serine 182 and threonine 202. The OCT domain maps to 382–468 (GRNAQVREFE…ERAVAFDWDP (87 aa)). Residues 521–570 (RAAMQAERAAGHWADPSIDDDRHDEQSLFGRGEVEEYEDEPGADGSRQLD) form a disordered region.

This sequence belongs to the TRAFAC class OBG-HflX-like GTPase superfamily. OBG GTPase family. As to quaternary structure, monomer. Mg(2+) is required as a cofactor.

The protein resides in the cytoplasm. Its function is as follows. An essential GTPase which binds GTP, GDP and possibly (p)ppGpp with moderate affinity, with high nucleotide exchange rates and a fairly low GTP hydrolysis rate. Plays a role in control of the cell cycle, stress response, ribosome biogenesis and in those bacteria that undergo differentiation, in morphogenesis control. The sequence is that of GTPase Obg from Bifidobacterium animalis subsp. lactis (strain AD011).